Consider the following 170-residue polypeptide: Ureidoglycolate lyase (170 aa).

The protein belongs to the ureidoglycolate lyase family. In terms of assembly, homodimer. Ni(2+) serves as cofactor.

It carries out the reaction (S)-ureidoglycolate = urea + glyoxylate. It functions in the pathway nitrogen metabolism; (S)-allantoin degradation. In terms of biological role, catalyzes the catabolism of the allantoin degradation intermediate (S)-ureidoglycolate, generating urea and glyoxylate. Involved in the utilization of allantoin as nitrogen source. The protein is Ureidoglycolate lyase of Pseudomonas syringae pv. tomato (strain ATCC BAA-871 / DC3000).